The following is a 149-amino-acid chain: Transcriptional regulator MraZ (149 aa).

SpoVT-AbrB domains lie at 7-54 (KYVN…GISH) and 83-126 (AVQL…QPQN).

Belongs to the MraZ family. Forms oligomers.

The protein resides in the cytoplasm. The protein localises to the nucleoid. The polypeptide is Transcriptional regulator MraZ (Rickettsia rickettsii (strain Sheila Smith)).